The following is a 155-amino-acid chain: MPKQNKYKGVSVDYRYGDESVARFINAVMLDGKKDVATRIVYDAFTIIAEKMNGESPLEVYRKAMSNIAPVVEVRSKRVGGATYQIPMEVKPSRRGALAFRWLKLYAKRRGGRSMAEKLAAELMDAANEQGASVKKRDEVHRMADANKAFAHFRF.

Belongs to the universal ribosomal protein uS7 family. In terms of assembly, part of the 30S ribosomal subunit. Contacts proteins S9 and S11.

One of the primary rRNA binding proteins, it binds directly to 16S rRNA where it nucleates assembly of the head domain of the 30S subunit. Is located at the subunit interface close to the decoding center, probably blocks exit of the E-site tRNA. This Chlorobium phaeobacteroides (strain DSM 266 / SMG 266 / 2430) protein is Small ribosomal subunit protein uS7.